Here is a 200-residue protein sequence, read N- to C-terminus: ATP synthase subunit s, mitochondrial (200 aa).

Residues 1–25 (MMMFGKISRQLFSLKKIPWSCDSRY) constitute a mitochondrion transit peptide. The N-terminal domain stretch occupies residues 1–61 (MMMFGKISRQ…SEWLLRCGAK (61 aa)). A Mg(2+)-binding site is contributed by Gly59. LRR repeat units lie at residues 62-87 (VRYC…RYKI), 88-116 (QAID…RITL), 117-141 (CRCH…KSLL), and 142-173 (ELEI…LSDL). Position 93 (Thr93) interacts with Mg(2+).

Belongs to the ATP synthase subunit s family. In terms of assembly, homotetramer. Associates with ATP synthase.

It is found in the mitochondrion. Its subcellular location is the mitochondrion inner membrane. Its function is as follows. Involved in regulation of mitochondrial membrane ATP synthase. Necessary for H(+) conduction of ATP synthase. Facilitates energy-driven catalysis of ATP synthesis by blocking a proton leak through an alternative proton exit pathway. In Rattus norvegicus (Rat), this protein is ATP synthase subunit s, mitochondrial.